The chain runs to 495 residues: NADP/NAD-dependent aldehyde dehydrogenase PuuC (495 aa).

244 to 249 contacts NAD(+); the sequence is GSTRTG. Residues Glu-267 and Cys-302 contribute to the active site.

The protein belongs to the aldehyde dehydrogenase family.

It catalyses the reaction an aldehyde + NADP(+) + H2O = a carboxylate + NADPH + 2 H(+). The catalysed reaction is an aldehyde + NAD(+) + H2O = a carboxylate + NADH + 2 H(+). The enzyme catalyses 4-(gamma-L-glutamylamino)butanal + NADP(+) + H2O = 4-(gamma-L-glutamylamino)butanoate + NADPH + 2 H(+). It carries out the reaction 4-(gamma-L-glutamylamino)butanal + NAD(+) + H2O = 4-(gamma-L-glutamylamino)butanoate + NADH + 2 H(+). It functions in the pathway amine and polyamine degradation; putrescine degradation; 4-aminobutanoate from putrescine: step 3/4. Lithium ions exhibits the highest inhibition (97%). To a lesser extent (5-20%), potassium, sodium, and ammonium ions also inhibit PuuC activity. Transition metals, such as copper and zinc ions inhibit PuuC activity by more than 90%. The presence of heavy metals (mercury, silver) or sodium hydrogensulfite in the reaction mixture completely inactivate PuuC; in contrast, disulfide reductants such as DTT and 2-mercaptoethanol significantly increase its activity by 75% and 27%, respectively. Catalyzes the oxidation of 3-hydroxypropionaldehyde (3-HPA) to 3-hydroxypropionic acid (3-HP). It acts preferentially with NAD but can also use NADP. 3-HPA appears to be the most suitable substrate for PuuC followed by isovaleraldehyde, propionaldehyde, butyraldehyde, and valeraldehyde. It might play a role in propionate and/or acetic acid metabolisms. Also involved in the breakdown of putrescine through the oxidation of gamma-Glu-gamma-aminobutyraldehyde to gamma-Glu-gamma-aminobutyrate (gamma-Glu-GABA). This is NADP/NAD-dependent aldehyde dehydrogenase PuuC from Escherichia coli (strain K12).